A 156-amino-acid polypeptide reads, in one-letter code: 6,7-dimethyl-8-ribityllumazine synthase (156 aa).

5-amino-6-(D-ribitylamino)uracil is bound by residues Phe-23, 57-59, and 81-83; these read AFE and AVI. 86–87 contacts (2S)-2-hydroxy-3-oxobutyl phosphate; the sequence is AT. Catalysis depends on His-89, which acts as the Proton donor. A 5-amino-6-(D-ribitylamino)uracil-binding site is contributed by Phe-114. Residue Arg-128 participates in (2S)-2-hydroxy-3-oxobutyl phosphate binding.

Belongs to the DMRL synthase family.

The catalysed reaction is (2S)-2-hydroxy-3-oxobutyl phosphate + 5-amino-6-(D-ribitylamino)uracil = 6,7-dimethyl-8-(1-D-ribityl)lumazine + phosphate + 2 H2O + H(+). It participates in cofactor biosynthesis; riboflavin biosynthesis; riboflavin from 2-hydroxy-3-oxobutyl phosphate and 5-amino-6-(D-ribitylamino)uracil: step 1/2. Functionally, catalyzes the formation of 6,7-dimethyl-8-ribityllumazine by condensation of 5-amino-6-(D-ribitylamino)uracil with 3,4-dihydroxy-2-butanone 4-phosphate. This is the penultimate step in the biosynthesis of riboflavin. The sequence is that of 6,7-dimethyl-8-ribityllumazine synthase from Campylobacter concisus (strain 13826).